Here is a 231-residue protein sequence, read N- to C-terminus: Ribonuclease 3 (231 aa).

The RNase III domain maps to 5 to 134; the sequence is QKKLKNDYGL…FLGALFIDQG (130 aa). Glutamate 47 lines the Mg(2+) pocket. The active site involves aspartate 51. Mg(2+) is bound by residues asparagine 120 and glutamate 123. Glutamate 123 is an active-site residue. Residues 160-229 enclose the DRBM domain; that stretch reads DYKTELQEVL…AENAIKGQNH (70 aa).

Belongs to the ribonuclease III family. In terms of assembly, homodimer. Requires Mg(2+) as cofactor.

It localises to the cytoplasm. The enzyme catalyses Endonucleolytic cleavage to 5'-phosphomonoester.. In terms of biological role, digests double-stranded RNA. Involved in the processing of primary rRNA transcript to yield the immediate precursors to the large and small rRNAs (23S and 16S). Processes some mRNAs, and tRNAs when they are encoded in the rRNA operon. Processes pre-crRNA and tracrRNA of type II CRISPR loci if present in the organism. The sequence is that of Ribonuclease 3 from Lactococcus lactis subsp. lactis (strain IL1403) (Streptococcus lactis).